A 550-amino-acid chain; its full sequence is Chaperonin GroEL (550 aa).

ATP contacts are provided by residues 30–33 (TLGP), lysine 51, 87–91 (DGTTT), glycine 415, and aspartate 495.

Belongs to the chaperonin (HSP60) family. In terms of assembly, forms a cylinder of 14 subunits composed of two heptameric rings stacked back-to-back. Interacts with the co-chaperonin GroES.

The protein resides in the cytoplasm. The catalysed reaction is ATP + H2O + a folded polypeptide = ADP + phosphate + an unfolded polypeptide.. Its function is as follows. Together with its co-chaperonin GroES, plays an essential role in assisting protein folding. The GroEL-GroES system forms a nano-cage that allows encapsulation of the non-native substrate proteins and provides a physical environment optimized to promote and accelerate protein folding. The polypeptide is Chaperonin GroEL (Shewanella woodyi (strain ATCC 51908 / MS32)).